Consider the following 317-residue polypeptide: tRNA dimethylallyltransferase (317 aa).

An ATP-binding site is contributed by 14 to 21 (GPTAVGKT). Position 16–21 (16–21 (TAVGKT)) interacts with substrate. Residues 39 to 42 (DSMQ) form an interaction with substrate tRNA region.

This sequence belongs to the IPP transferase family. In terms of assembly, monomer. Mg(2+) is required as a cofactor.

The enzyme catalyses adenosine(37) in tRNA + dimethylallyl diphosphate = N(6)-dimethylallyladenosine(37) in tRNA + diphosphate. Its function is as follows. Catalyzes the transfer of a dimethylallyl group onto the adenine at position 37 in tRNAs that read codons beginning with uridine, leading to the formation of N6-(dimethylallyl)adenosine (i(6)A). The polypeptide is tRNA dimethylallyltransferase (Bacillus cereus (strain ATCC 14579 / DSM 31 / CCUG 7414 / JCM 2152 / NBRC 15305 / NCIMB 9373 / NCTC 2599 / NRRL B-3711)).